The chain runs to 338 residues: Heat-inducible transcription repressor HrcA (338 aa).

This sequence belongs to the HrcA family.

In terms of biological role, negative regulator of class I heat shock genes (grpE-dnaK-dnaJ and groELS operons). Prevents heat-shock induction of these operons. This chain is Heat-inducible transcription repressor HrcA, found in Nitrosomonas eutropha (strain DSM 101675 / C91 / Nm57).